We begin with the raw amino-acid sequence, 724 residues long: Catalase-peroxidase (724 aa).

The tryptophyl-tyrosyl-methioninium (Trp-Tyr) (with M-252) cross-link spans 98 to 226 (WHSAGTYRIA…LATVMMGLIY (129 aa)). His99 functions as the Proton acceptor in the catalytic mechanism. The tryptophyl-tyrosyl-methioninium (Tyr-Met) (with W-98) cross-link spans 226–252 (YVNPEGVDGNPDPLKTAQDMRVTFARM). His267 is a binding site for heme b.

It belongs to the peroxidase family. Peroxidase/catalase subfamily. In terms of assembly, homodimer or homotetramer. Heme b is required as a cofactor. Formation of the three residue Trp-Tyr-Met cross-link is important for the catalase, but not the peroxidase activity of the enzyme.

The catalysed reaction is H2O2 + AH2 = A + 2 H2O. It catalyses the reaction 2 H2O2 = O2 + 2 H2O. Bifunctional enzyme with both catalase and broad-spectrum peroxidase activity. The polypeptide is Catalase-peroxidase (Vibrio cholerae serotype O1 (strain ATCC 39541 / Classical Ogawa 395 / O395)).